The primary structure comprises 303 residues: MKWIHVNARFEADDMALAEELVAQIFFDLDLKGVVCEVPLPEPDEGFGSNALAQPDTHSISGYLPDLSTSDLLFADIKKKADALKGINVTLSTRIVDDQDWAESWKDFFFVTRITDTLVIRPSWREFEPKPGDVVIDLDPGMAFGTGTHETTAMCLALVQEQITPGASFLDVGTGSGILMIAAAKLGAGTLKGLDNDEAAVQIAGKNLEHNRISPQSFEIRCTTLDRYPHEKFDLVVANILAEVIISILPEIHSRLAPGGRAILSGIIIAWEERVKTALEDNGFTLVKTTTQGEWVALVAELV.

Positions 152, 173, 195, and 239 each coordinate S-adenosyl-L-methionine.

The protein belongs to the methyltransferase superfamily. PrmA family.

The protein resides in the cytoplasm. It catalyses the reaction L-lysyl-[protein] + 3 S-adenosyl-L-methionine = N(6),N(6),N(6)-trimethyl-L-lysyl-[protein] + 3 S-adenosyl-L-homocysteine + 3 H(+). Its function is as follows. Methylates ribosomal protein L11. This Desulforapulum autotrophicum (strain ATCC 43914 / DSM 3382 / VKM B-1955 / HRM2) (Desulfobacterium autotrophicum) protein is Ribosomal protein L11 methyltransferase.